We begin with the raw amino-acid sequence, 427 residues long: METFWLRLSFWVALVGGVISDNPESYSTNLSIHVDSVATFHGTELSFVVTTHQPTNLALPSNGSMHNYCPQQTKITSAFKYINTVISCTIFIVGMVGNATLLRIIYQNKCMRNGPNALIASLALGDLIYVVIDLPINVFKLLAGRWPFEQNDFGVFLCKLFPFLQKSSVGITVLNLCALSVDRYRAVASWSRVQGIGIPLVTAIEIVSIWILSFILAIPEAIGFVMVPFEYKGAQHRTCMLNATSKFMEFYQDVKDWWLFGFYFCMPLVCTAIFYTLMTCEMLNRRNGSLRIALSEHLKQRREVAKTVFCLVVIFALCWFPLHLSRILKKTVYDEMDTNRCELLSFLLLMDYIGINLATMNSCINPIALYFVSKKFKNCFQSCLCCCCYQSKSLMTSVPMNGTSIQWKNHEQNNHNTERSSHKDSIN.

A signal peptide spans 1 to 20; that stretch reads METFWLRLSFWVALVGGVIS. The Extracellular portion of the chain corresponds to 21–80; sequence DNPESYSTNLSIHVDSVATFHGTELSFVVTTHQPTNLALPSNGSMHNYCPQQTKITSAFK. Residues N29 and N62 are each glycosylated (N-linked (GlcNAc...) asparagine). Residues 81–102 form a helical membrane-spanning segment; sequence YINTVISCTIFIVGMVGNATLL. The Cytoplasmic segment spans residues 103–112; it reads RIIYQNKCMR. Residues 113–132 traverse the membrane as a helical segment; sequence NGPNALIASLALGDLIYVVI. The Extracellular segment spans residues 133 to 159; it reads DLPINVFKLLAGRWPFEQNDFGVFLCK. C158 and C239 are joined by a disulfide. The helical transmembrane segment at 160–181 threads the bilayer; sequence LFPFLQKSSVGITVLNLCALSV. The Cytoplasmic portion of the chain corresponds to 182 to 205; the sequence is DRYRAVASWSRVQGIGIPLVTAIE. A helical membrane pass occupies residues 206–229; that stretch reads IVSIWILSFILAIPEAIGFVMVPF. At 230 to 256 the chain is on the extracellular side; the sequence is EYKGAQHRTCMLNATSKFMEFYQDVKD. The helical transmembrane segment at 257 to 278 threads the bilayer; it reads WWLFGFYFCMPLVCTAIFYTLM. Topologically, residues 279–306 are cytoplasmic; sequence TCEMLNRRNGSLRIALSEHLKQRREVAK. Residues 307-328 traverse the membrane as a helical segment; the sequence is TVFCLVVIFALCWFPLHLSRIL. Residues 329–347 lie on the Extracellular side of the membrane; the sequence is KKTVYDEMDTNRCELLSFL. Residues 348–372 traverse the membrane as a helical segment; that stretch reads LLMDYIGINLATMNSCINPIALYFV. The Cytoplasmic segment spans residues 373–427; it reads SKKFKNCFQSCLCCCCYQSKSLMTSVPMNGTSIQWKNHEQNNHNTERSSHKDSIN. A Phosphoserine modification is found at S425.

This sequence belongs to the G-protein coupled receptor 1 family. Endothelin receptor subfamily. EDNRA sub-subfamily. Interacts with HDAC7 and KAT5.

It is found in the cell membrane. Functionally, receptor for endothelin-1. Mediates its action by association with G proteins that activate a phosphatidylinositol-calcium second messenger system. The rank order of binding affinities for ET-A is: ET1 &gt; ET2 &gt;&gt; ET3. The protein is Endothelin-1 receptor of Bos taurus (Bovine).